The following is a 254-amino-acid chain: 5-oxoprolinase subunit A (254 aa).

It belongs to the LamB/PxpA family. In terms of assembly, forms a complex composed of PxpA, PxpB and PxpC.

It carries out the reaction 5-oxo-L-proline + ATP + 2 H2O = L-glutamate + ADP + phosphate + H(+). Functionally, catalyzes the cleavage of 5-oxoproline to form L-glutamate coupled to the hydrolysis of ATP to ADP and inorganic phosphate. The protein is 5-oxoprolinase subunit A of Burkholderia thailandensis (strain ATCC 700388 / DSM 13276 / CCUG 48851 / CIP 106301 / E264).